The chain runs to 321 residues: Protein FAM110C (321 aa).

Disordered stretches follow at residues 1 to 84 (MRAL…APAP) and 111 to 203 (RGSG…SQSD). Basic and acidic residues-rich tracts occupy residues 15 to 46 (LLPR…DRAK) and 131 to 145 (GKDK…DEGK). The segment covering 169-181 (APAARSAAPSSVP) has biased composition (low complexity). A Phosphoserine modification is found at S241.

Belongs to the FAM110 family. Interacts with AKT1; the interaction is transient and follows AKT1 activation. Interacts with PPP2CA and alpha-tubulin. In terms of tissue distribution, detected in stomach, thyroid, trachea, adrenal gland and testis, and at low levels in prostate, ovary, intestine, colon, spinal cord and lymph node.

It is found in the cytoplasm. Its subcellular location is the cytoskeleton. It localises to the microtubule organizing center. The protein localises to the centrosome. The protein resides in the spindle pole. It is found in the nucleus. Functionally, may play a role in microtubule organization. May play a role in cell spreading and cell migration of epithelial cells; the function may involve the AKT1 signaling pathway. This Homo sapiens (Human) protein is Protein FAM110C (FAM110C).